The primary structure comprises 506 residues: Secreted RxLR effector protein 134 (506 aa).

Positions 1–19 are cleaved as a signal peptide; it reads MQGAYCVAVALLIAASGQA. The RxLR-dEER signature appears at 50 to 71; it reads RVLQVSHYPKDDLMLLAGNEER.

The protein belongs to the RxLR effector family.

It localises to the secreted. Its subcellular location is the host nucleus. Functionally, secreted effector that completely suppresses the host cell death induced by cell death-inducing proteins. The protein is Secreted RxLR effector protein 134 of Plasmopara viticola (Downy mildew of grapevine).